We begin with the raw amino-acid sequence, 357 residues long: Aminomethyltransferase (357 aa).

Belongs to the GcvT family. The glycine cleavage system is composed of four proteins: P, T, L and H.

The enzyme catalyses N(6)-[(R)-S(8)-aminomethyldihydrolipoyl]-L-lysyl-[protein] + (6S)-5,6,7,8-tetrahydrofolate = N(6)-[(R)-dihydrolipoyl]-L-lysyl-[protein] + (6R)-5,10-methylene-5,6,7,8-tetrahydrofolate + NH4(+). Functionally, the glycine cleavage system catalyzes the degradation of glycine. This Deinococcus deserti (strain DSM 17065 / CIP 109153 / LMG 22923 / VCD115) protein is Aminomethyltransferase.